The following is a 278-amino-acid chain: Formamidopyrimidine-DNA glycosylase (278 aa).

Residue P2 is the Schiff-base intermediate with DNA of the active site. E3 acts as the Proton donor in catalysis. K58 serves as the catalytic Proton donor; for beta-elimination activity. DNA-binding residues include H92 and R111. Residues 239–273 (HVYGKKGVPCERCGTPIEKIKVAQRGTHFCPKCQI) form an FPG-type zinc finger. The active-site Proton donor; for delta-elimination activity is R263.

Belongs to the FPG family. Monomer. Zn(2+) is required as a cofactor.

The enzyme catalyses Hydrolysis of DNA containing ring-opened 7-methylguanine residues, releasing 2,6-diamino-4-hydroxy-5-(N-methyl)formamidopyrimidine.. It catalyses the reaction 2'-deoxyribonucleotide-(2'-deoxyribose 5'-phosphate)-2'-deoxyribonucleotide-DNA = a 3'-end 2'-deoxyribonucleotide-(2,3-dehydro-2,3-deoxyribose 5'-phosphate)-DNA + a 5'-end 5'-phospho-2'-deoxyribonucleoside-DNA + H(+). In terms of biological role, involved in base excision repair of DNA damaged by oxidation or by mutagenic agents. Acts as a DNA glycosylase that recognizes and removes damaged bases. Has a preference for oxidized purines, such as 7,8-dihydro-8-oxoguanine (8-oxoG). Has AP (apurinic/apyrimidinic) lyase activity and introduces nicks in the DNA strand. Cleaves the DNA backbone by beta-delta elimination to generate a single-strand break at the site of the removed base with both 3'- and 5'-phosphates. The polypeptide is Formamidopyrimidine-DNA glycosylase (Latilactobacillus sakei subsp. sakei (strain 23K) (Lactobacillus sakei subsp. sakei)).